The following is a 172-amino-acid chain: MSLPNPADLIRQMAVDLRAHLARRGITEPRYIGIRTGGVWVAQALQQELGDTSPLGTLDVSFYRDDFSQNGLHPQVRPSELPFEVEGQHLVLIDDVLMSGRTIRAALNELFDYGRPASVTLVCLLDLDAGELPIRPNVLGATLSLAAHERVKLTGPAPLALERQDLATASAL.

A PRPP-binding motif is present at residues 90-102; that stretch reads LVLIDDVLMSGRT.

It belongs to the purine/pyrimidine phosphoribosyltransferase family. PyrR subfamily.

It catalyses the reaction UMP + diphosphate = 5-phospho-alpha-D-ribose 1-diphosphate + uracil. In terms of biological role, regulates the transcription of the pyrimidine nucleotide (pyr) operon in response to exogenous pyrimidines. Also displays a weak uracil phosphoribosyltransferase activity which is not physiologically significant. The chain is Bifunctional protein PyrR from Pseudomonas putida (strain W619).